A 287-amino-acid polypeptide reads, in one-letter code: tRNA uridine(34) hydroxylase (287 aa).

The region spanning 132–226 (EGRPVVMLDT…YFEEVGGAHY (95 aa)) is the Rhodanese domain. C186 acts as the Cysteine persulfide intermediate in catalysis.

The protein belongs to the TrhO family.

The enzyme catalyses uridine(34) in tRNA + AH2 + O2 = 5-hydroxyuridine(34) in tRNA + A + H2O. Its function is as follows. Catalyzes oxygen-dependent 5-hydroxyuridine (ho5U) modification at position 34 in tRNAs. The sequence is that of tRNA uridine(34) hydroxylase from Paraburkholderia xenovorans (strain LB400).